A 155-amino-acid polypeptide reads, in one-letter code: MQVRIVSLAAQPLFVLRVQGPFAQSLGPGFERLMAWSARHGLRGQWMALYYDNPREVAPDALRADVALTTASVTLPSDGEAYGIRRGALAGGLYALAQVRVTDNDFATPWIALFDQALPACGYRPDGGPCFERYLSDGRGSGEWLLELGVPVRKN.

It belongs to the DNA gyrase inhibitor family. As to quaternary structure, interacts with DNA gyrase.

The protein resides in the cytoplasm. Functionally, inhibits the supercoiling activity of DNA gyrase. Acts by inhibiting DNA gyrase at an early step, prior to (or at the step of) binding of DNA by the gyrase. It protects cells against toxins that target DNA gyrase, by inhibiting activity of these toxins and reducing the formation of lethal double-strand breaks in the cell. This Edwardsiella ictaluri (strain 93-146) protein is DNA gyrase inhibitor.